A 504-amino-acid polypeptide reads, in one-letter code: Glucose-6-phosphate isomerase (504 aa).

E333 (proton donor) is an active-site residue. Active-site residues include H364 and K473.

This sequence belongs to the GPI family.

It is found in the cytoplasm. The enzyme catalyses alpha-D-glucose 6-phosphate = beta-D-fructose 6-phosphate. It functions in the pathway carbohydrate biosynthesis; gluconeogenesis. The protein operates within carbohydrate degradation; glycolysis; D-glyceraldehyde 3-phosphate and glycerone phosphate from D-glucose: step 2/4. Catalyzes the reversible isomerization of glucose-6-phosphate to fructose-6-phosphate. The polypeptide is Glucose-6-phosphate isomerase (Xanthomonas oryzae pv. oryzae (strain KACC10331 / KXO85)).